We begin with the raw amino-acid sequence, 278 residues long: Shikimate dehydrogenase (NADP(+)) (278 aa).

Residues 19-21 (SRS) and threonine 66 contribute to the shikimate site. The active-site Proton acceptor is lysine 70. Position 82 (aspartate 82) interacts with NADP(+). Residues asparagine 91 and aspartate 107 each coordinate shikimate. NADP(+) contacts are provided by residues 133 to 137 (GAGGA), 157 to 162 (NRTRAK), and isoleucine 222. Tyrosine 224 is a shikimate binding site. Glycine 245 is a binding site for NADP(+).

It belongs to the shikimate dehydrogenase family. Homodimer.

It carries out the reaction shikimate + NADP(+) = 3-dehydroshikimate + NADPH + H(+). It participates in metabolic intermediate biosynthesis; chorismate biosynthesis; chorismate from D-erythrose 4-phosphate and phosphoenolpyruvate: step 4/7. Functionally, involved in the biosynthesis of the chorismate, which leads to the biosynthesis of aromatic amino acids. Catalyzes the reversible NADPH linked reduction of 3-dehydroshikimate (DHSA) to yield shikimate (SA). The sequence is that of Shikimate dehydrogenase (NADP(+)) from Dinoroseobacter shibae (strain DSM 16493 / NCIMB 14021 / DFL 12).